The primary structure comprises 479 residues: MSPQTETKASVGFKAGVKEYKLTYYTPEYETKDTDILAAFRVTPQPGVPPEEAGAAVAAESSTGTWTTVWTDGLTSLDRYKGRCYHIEPVPGEETQFIAYVAYPLDLFEEGSVTNMFTSIVGNVFGFKALAALRLEDLRIPPAYTKTFQGPPHGIQVERDKLNKYGRPLLGCTIKPKLGLSAKNYGRAVYECLRGGLDFTKDDENVNSQPFMRWRDRFLFCAEAIYKSQAETGEIKGHYLNATAGTCEEMIKRAVFARELGVPIVMHDYLTGGFTANTSLSHYCRDNGLLLHIHRAMHAVIDRQKNHGMHFRVLAKALRLSGGDHVHAGTVVGKLEGDRESTLGFVDLLRDDYIEKDRSRGIFFTQDWVSLPGVLPVASGGIHVWHMPALTEIFGDDSVLQFGGGTLGHPWGNAPGAVANRVALEACVQARNEGRDLAVEGNEIIREACKWSPELAAACEVWKEIRFNFPTVDTLDDQA.

A propeptide spanning residues methionine 1 to serine 2 is cleaved from the precursor. Substrate contacts are provided by asparagine 123 and threonine 173. Catalysis depends on lysine 175, which acts as the Proton acceptor. Lysine 177 is a binding site for substrate. Mg(2+) is bound by residues lysine 201, aspartate 203, and glutamate 204. Lysine 201 carries the post-translational modification N6-carboxylysine. At serine 208 the chain carries Phosphoserine. Histidine 294 functions as the Proton acceptor in the catalytic mechanism. Substrate-binding residues include arginine 295 and histidine 327. At threonine 330 the chain carries Phosphothreonine. A substrate-binding site is contributed by serine 379.

The protein belongs to the RuBisCO large chain family. Type I subfamily. In terms of assembly, heterohexadecamer of 8 large chains and 8 small chains; disulfide-linked. The disulfide link is formed within the large subunit homodimers. Mg(2+) serves as cofactor. In terms of processing, the disulfide bond which can form in the large chain dimeric partners within the hexadecamer appears to be associated with oxidative stress and protein turnover.

It localises to the plastid. The protein resides in the chloroplast. The catalysed reaction is 2 (2R)-3-phosphoglycerate + 2 H(+) = D-ribulose 1,5-bisphosphate + CO2 + H2O. It carries out the reaction D-ribulose 1,5-bisphosphate + O2 = 2-phosphoglycolate + (2R)-3-phosphoglycerate + 2 H(+). RuBisCO catalyzes two reactions: the carboxylation of D-ribulose 1,5-bisphosphate, the primary event in carbon dioxide fixation, as well as the oxidative fragmentation of the pentose substrate in the photorespiration process. Both reactions occur simultaneously and in competition at the same active site. In Olimarabidopsis pumila (Dwarf rocket), this protein is Ribulose bisphosphate carboxylase large chain.